The primary structure comprises 383 residues: GTPase-interacting component 2 (383 aa).

The disordered stretch occupies residues 63-106 (SNKKNIELPPLSPNSHPSCHHRRSNSNSAKSKESSSSSSSANKT). The span at 87-105 (NSNSAKSKESSSSSSSANK) shows a compositional bias: low complexity. In terms of domain architecture, CRIB spans 134-147 (ISTPFDFQHISHAD). Residues 155–165 (EQLQEPSSLST) are compositionally biased toward polar residues. Positions 155 to 189 (EQLQEPSSLSTEIKDDYTSSSSKRDSKSLNKAFVT) are disordered. Residues 166–182 (EIKDDYTSSSSKRDSKS) show a composition bias toward basic and acidic residues. 5 positions are modified to phosphoserine: Ser254, Ser258, Ser337, Ser345, and Ser367. Residues 319-361 (ETPNSNKDSAKAFFPSRQSPLPKRRNSIATPSPQSKFSYSDSP) are disordered. A compositionally biased stretch (polar residues) spans 345–361 (SIATPSPQSKFSYSDSP).

The protein belongs to the BORG/CEP family. As to quaternary structure, interacts with GTP-bound CDC42.

The protein localises to the bud neck. It localises to the bud tip. The protein resides in the cytoplasm. Its subcellular location is the cell cortex. It is found in the cytoskeleton. Required for cell size and shape control, bud site selection, bud emergence, actin cytoskeletal organization, mitotic spindle orientation/positioning, and mating projection formation in response to mating pheromone. This chain is GTPase-interacting component 2 (GIC2), found in Saccharomyces cerevisiae (strain ATCC 204508 / S288c) (Baker's yeast).